A 269-amino-acid chain; its full sequence is Diaminopimelate epimerase (269 aa).

Substrate-binding residues include N13, Q46, and N65. The active-site Proton donor is C74. Substrate-binding positions include 75–76 (GN), N149, N182, and 200–201 (ER). C209 serves as the catalytic Proton acceptor. Residue 210–211 (GT) coordinates substrate.

The protein belongs to the diaminopimelate epimerase family. As to quaternary structure, homodimer.

Its subcellular location is the cytoplasm. The catalysed reaction is (2S,6S)-2,6-diaminopimelate = meso-2,6-diaminopimelate. It participates in amino-acid biosynthesis; L-lysine biosynthesis via DAP pathway; DL-2,6-diaminopimelate from LL-2,6-diaminopimelate: step 1/1. Catalyzes the stereoinversion of LL-2,6-diaminopimelate (L,L-DAP) to meso-diaminopimelate (meso-DAP), a precursor of L-lysine and an essential component of the bacterial peptidoglycan. This Zymomonas mobilis subsp. mobilis (strain ATCC 31821 / ZM4 / CP4) protein is Diaminopimelate epimerase.